Here is a 244-residue protein sequence, read N- to C-terminus: Mitochondrial inner membrane protease atp23 (244 aa).

Residues Met1–Gln22 are disordered. His144 lines the a divalent metal cation pocket. Glu145 is a catalytic residue. Residue His148 coordinates a divalent metal cation.

Belongs to the peptidase M76 family.

It localises to the mitochondrion inner membrane. Functionally, has a dual role in the assembly of mitochondrial ATPase. Acts as a protease that removes N-terminal residues of mitochondrial ATPase CF(0) subunit 6 at the intermembrane space side. Also involved in the correct assembly of the membrane-embedded ATPase CF(0) particle, probably mediating association of subunit 6 with the subunit 9 ring. This chain is Mitochondrial inner membrane protease atp23 (atp23), found in Sclerotinia sclerotiorum (strain ATCC 18683 / 1980 / Ss-1) (White mold).